The primary structure comprises 633 residues: 1-deoxy-D-xylulose-5-phosphate synthase (633 aa).

Residues histidine 72 and 113 to 115 (GHS) each bind thiamine diphosphate. Residue aspartate 144 coordinates Mg(2+). Thiamine diphosphate-binding positions include 145 to 146 (GA), asparagine 173, tyrosine 284, and glutamate 367. Asparagine 173 serves as a coordination point for Mg(2+).

This sequence belongs to the transketolase family. DXPS subfamily. In terms of assembly, homodimer. It depends on Mg(2+) as a cofactor. Thiamine diphosphate is required as a cofactor.

It carries out the reaction D-glyceraldehyde 3-phosphate + pyruvate + H(+) = 1-deoxy-D-xylulose 5-phosphate + CO2. The protein operates within metabolic intermediate biosynthesis; 1-deoxy-D-xylulose 5-phosphate biosynthesis; 1-deoxy-D-xylulose 5-phosphate from D-glyceraldehyde 3-phosphate and pyruvate: step 1/1. In terms of biological role, catalyzes the acyloin condensation reaction between C atoms 2 and 3 of pyruvate and glyceraldehyde 3-phosphate to yield 1-deoxy-D-xylulose-5-phosphate (DXP). In Bacillus licheniformis (strain ATCC 14580 / DSM 13 / JCM 2505 / CCUG 7422 / NBRC 12200 / NCIMB 9375 / NCTC 10341 / NRRL NRS-1264 / Gibson 46), this protein is 1-deoxy-D-xylulose-5-phosphate synthase.